A 252-amino-acid chain; its full sequence is uncharacterized protein (252 aa).

The N-terminal stretch at 1 to 23 (MKLLKTVPAIVMLAGGMFASLNA) is a signal peptide. A disordered region spans residues 231 to 252 (EPPESAPEHTDRRTTLSLGYSM).

This is an uncharacterized protein from Escherichia coli (strain K12).